Here is a 259-residue protein sequence, read N- to C-terminus: Phosphatidylglycerol--prolipoprotein diacylglyceryl transferase (259 aa).

4 consecutive transmembrane segments (helical) span residues 16-36, 55-75, 92-112, and 117-137; these read LAISWYSLSYVIGILLGWFYA, FITYAVIGIIVGGRLGFVLLY, EGGMSFHGGALGGIIAAYLFC, and INFLSLTDIIAPVVPIGLFLG. Arg138 is a binding site for a 1,2-diacyl-sn-glycero-3-phospho-(1'-sn-glycerol). Helical transmembrane passes span 172–192, 201–221, and 228–248; these read QLYEAFFEGLVLFSILAYATF, GLNSGIFFTFYGLFRITIEIF, and IGFILDSLTMGQILSVPMLLL.

The protein belongs to the Lgt family.

It is found in the cell inner membrane. It catalyses the reaction L-cysteinyl-[prolipoprotein] + a 1,2-diacyl-sn-glycero-3-phospho-(1'-sn-glycerol) = an S-1,2-diacyl-sn-glyceryl-L-cysteinyl-[prolipoprotein] + sn-glycerol 1-phosphate + H(+). It functions in the pathway protein modification; lipoprotein biosynthesis (diacylglyceryl transfer). Catalyzes the transfer of the diacylglyceryl group from phosphatidylglycerol to the sulfhydryl group of the N-terminal cysteine of a prolipoprotein, the first step in the formation of mature lipoproteins. The polypeptide is Phosphatidylglycerol--prolipoprotein diacylglyceryl transferase (Rickettsia rickettsii (strain Iowa)).